We begin with the raw amino-acid sequence, 259 residues long: MKHAEMTGQIIGIIPARYGSTRFPGKPLASILGKTLLQRTYENSLRASALSDLIVATDDERIFEHVRSFNGKVVMTSEQCPTGTDRLAEVLSLYPEWMHATAIVNIQGDEPCLNPLTINLAVQALVNDPQGQVSTIVTPLLDEEEAKNSSIVKCVMDQQGNALYFSRALIPSNKTNSFKNGAIYFRHLGLYVYRPSFIINYQKLPSTPLQLEEDLEQLKVLEHGYRIKVAIVDQANIGVDTPEDIHKVEEWLCKQNTFL.

This sequence belongs to the KdsB family.

It is found in the cytoplasm. The catalysed reaction is 3-deoxy-alpha-D-manno-oct-2-ulosonate + CTP = CMP-3-deoxy-beta-D-manno-octulosonate + diphosphate. It participates in nucleotide-sugar biosynthesis; CMP-3-deoxy-D-manno-octulosonate biosynthesis; CMP-3-deoxy-D-manno-octulosonate from 3-deoxy-D-manno-octulosonate and CTP: step 1/1. Its pathway is bacterial outer membrane biogenesis; lipopolysaccharide biosynthesis. Functionally, activates KDO (a required 8-carbon sugar) for incorporation into bacterial lipopolysaccharide in Gram-negative bacteria. The polypeptide is 3-deoxy-manno-octulosonate cytidylyltransferase (Protochlamydia amoebophila (strain UWE25)).